The sequence spans 145 residues: Bacilliredoxin ABC2045 (145 aa).

Belongs to the bacilliredoxin family.

The chain is Bacilliredoxin ABC2045 from Shouchella clausii (strain KSM-K16) (Alkalihalobacillus clausii).